A 225-amino-acid polypeptide reads, in one-letter code: 7-cyano-7-deazaguanine synthase (225 aa).

ATP is bound at residue V10–L20. Residues C189, C199, C202, and C205 each coordinate Zn(2+).

This sequence belongs to the QueC family. Zn(2+) is required as a cofactor.

It carries out the reaction 7-carboxy-7-deazaguanine + NH4(+) + ATP = 7-cyano-7-deazaguanine + ADP + phosphate + H2O + H(+). Its pathway is purine metabolism; 7-cyano-7-deazaguanine biosynthesis. Functionally, catalyzes the ATP-dependent conversion of 7-carboxy-7-deazaguanine (CDG) to 7-cyano-7-deazaguanine (preQ(0)). This is 7-cyano-7-deazaguanine synthase from Saccharophagus degradans (strain 2-40 / ATCC 43961 / DSM 17024).